A 125-amino-acid chain; its full sequence is Mini-ribonuclease 3 (125 aa).

Asp-11 is a catalytic residue.

The protein belongs to the MrnC RNase family. As to quaternary structure, homodimer. Mg(2+) is required as a cofactor.

It localises to the cytoplasm. Involved in correct processing of both the 5' and 3' ends of 23S rRNA precursor. Processes 30S rRNA precursor transcript even in absence of ribonuclease 3 (Rnc); Rnc processes 30S rRNA into smaller rRNA precursors. This is Mini-ribonuclease 3 from Acholeplasma laidlawii (strain PG-8A).